Here is a 320-residue protein sequence, read N- to C-terminus: Probable L,D-transpeptidase YcfS (320 aa).

The N-terminal stretch at 1 to 23 (MMIKTRFSRWLTFFTFAAAVALA) is a signal peptide. Positions 45-90 (KFHVVENDGGSLEAIAKKYNVGFLALLQANPGVDPYVPRAGSVLTI) constitute a LysM domain. The region spanning 102 to 241 (EGIVINIAEL…VTPGTKVNII (140 aa)) is the L,D-TPase catalytic domain. Histidine 201 acts as the Proton donor/acceptor in catalysis. Catalysis depends on cysteine 217, which acts as the Nucleophile.

This sequence belongs to the YkuD family. As to quaternary structure, interacts with DsbG.

It is found in the periplasm. The protein operates within cell wall biogenesis; peptidoglycan biosynthesis. Its function is as follows. Responsible, at least in part, for anchoring of the major outer membrane lipoprotein (Lpp, also known as the Braun lipoprotein) to the peptidoglycan via a meso-diaminopimelyl-L-Lys- bond on the terminal residue of Lpp. The chain is Probable L,D-transpeptidase YcfS (ycfS) from Escherichia coli (strain K12).